A 278-amino-acid chain; its full sequence is Lectin 6 (278 aa).

Positions 1–23 are cleaved as a signal peptide; the sequence is MTLSSALIKIFITFLFLQNHVNS. Residues N116, N139, and N271 are each glycosylated (N-linked (GlcNAc...) asparagine).

The protein belongs to the leguminous lectin family.

Functionally, may be involved in arbuscular mycorrhizal (AM) symbiosis with AM fungi. The protein is Lectin 6 of Medicago truncatula (Barrel medic).